A 763-amino-acid chain; its full sequence is MAGFDWFWKALGGKSGRNQKRSVAIVNQVENHAAELDALDDVALAQRAKDLASGGRIDNHAEFLAILGVASQRTLGLKPYPVQSQAVLRLIEGDVVHMATGEGKTLVGAMAATGLGLMGKRVHSITVNDYLAVRDAEWMRPLVEFFGLSVASISEKMDAGERRQAYKAAIVYGPVNEIGFDVLRDQLITRREDAVQHGADVAIIDEADSVLVDEALVPLVLAGNQPGHAPRGKITDVVRSLKENDDYTIDDDRRNVFLTDKGAAKLEQQLGISSLYDDEHVGSTLVQVNLALHAQALLIRDIHYIVRDSKVLLIDASRGRVADLQRWPDGLQAAVEAKEGLAVSEGGKILDTITLQALIGRYPMACGMTGTAVEATDQLRTFYDLHVSVIERNHPLKRFDEADRIYATMAEKNRAIIDEIALLHSTGQPVLVGTHDVAESEELATALRELNIEVSVLNAKNDAEEAQIIAEAGDIGRVTVSTQMAGRGTDIRLGGADEADYDEVVKLGGLAVIGTARHRSQRLDNQLRGRAGRQGDPGLSLFFVSLDDDVVVSGGSGESVSAQPDATGLIDSDRIRDWVGHCQRVTEGQLLEIHSQSWNYNKLLADQRVIIDERRERLLDTALAWEELAQHAPARAAELEDLDQSVREQAARDIMLYHLDYNWSEHLALMDDVRESIHLRAIARETPLDEYHRIAVREFKDLAQRAVDDAVSTFKSVTIDHEGAHLDDEGLARPSATWTYMVSDNPLAGSGNSVISGIGNIFR.

ATP is bound by residues Gln83, 101–105 (GEGKT), and Asp490.

It belongs to the SecA family. Monomer and homodimer. Part of the essential Sec protein translocation apparatus which comprises SecA, SecYEG and auxiliary proteins SecDF. Other proteins may also be involved.

The protein localises to the cell membrane. Its subcellular location is the cytoplasm. The catalysed reaction is ATP + H2O + cellular proteinSide 1 = ADP + phosphate + cellular proteinSide 2.. Its function is as follows. Part of the Sec protein translocase complex. Interacts with the SecYEG preprotein conducting channel. Has a central role in coupling the hydrolysis of ATP to the transfer of proteins into and across the cell membrane, serving as an ATP-driven molecular motor driving the stepwise translocation of polypeptide chains across the membrane. The chain is Protein translocase subunit SecA 2 from Corynebacterium glutamicum (strain ATCC 13032 / DSM 20300 / JCM 1318 / BCRC 11384 / CCUG 27702 / LMG 3730 / NBRC 12168 / NCIMB 10025 / NRRL B-2784 / 534).